Consider the following 32-residue polypeptide: Natriuretic peptide Coa_NP1 (32 aa).

A disulfide bridge links Cys8 with Cys24.

The protein belongs to the natriuretic peptide family. Snake NP subfamily. In terms of tissue distribution, expressed by the venom gland.

Its subcellular location is the secreted. Its function is as follows. Snake venom natriuretic peptide that exhibits hypotensive and vasodepressor activity in rats. This chain is Natriuretic peptide Coa_NP1, found in Crotalus lutosus abyssus (Grand Canyon rattlesnake).